The sequence spans 193 residues: dTTP/UTP pyrophosphatase (193 aa).

Catalysis depends on D71, which acts as the Proton acceptor.

It belongs to the Maf family. YhdE subfamily. It depends on a divalent metal cation as a cofactor.

Its subcellular location is the cytoplasm. The enzyme catalyses dTTP + H2O = dTMP + diphosphate + H(+). It carries out the reaction UTP + H2O = UMP + diphosphate + H(+). In terms of biological role, nucleoside triphosphate pyrophosphatase that hydrolyzes dTTP and UTP. May have a dual role in cell division arrest and in preventing the incorporation of modified nucleotides into cellular nucleic acids. This Citrifermentans bemidjiense (strain ATCC BAA-1014 / DSM 16622 / JCM 12645 / Bem) (Geobacter bemidjiensis) protein is dTTP/UTP pyrophosphatase.